Reading from the N-terminus, the 556-residue chain is 2-succinyl-5-enolpyruvyl-6-hydroxy-3-cyclohexene-1-carboxylate synthase (556 aa).

The protein belongs to the TPP enzyme family. MenD subfamily. As to quaternary structure, homodimer. Mg(2+) is required as a cofactor. Requires Mn(2+) as cofactor. The cofactor is thiamine diphosphate.

It carries out the reaction isochorismate + 2-oxoglutarate + H(+) = 5-enolpyruvoyl-6-hydroxy-2-succinyl-cyclohex-3-ene-1-carboxylate + CO2. The protein operates within quinol/quinone metabolism; 1,4-dihydroxy-2-naphthoate biosynthesis; 1,4-dihydroxy-2-naphthoate from chorismate: step 2/7. It functions in the pathway quinol/quinone metabolism; menaquinone biosynthesis. Functionally, catalyzes the thiamine diphosphate-dependent decarboxylation of 2-oxoglutarate and the subsequent addition of the resulting succinic semialdehyde-thiamine pyrophosphate anion to isochorismate to yield 2-succinyl-5-enolpyruvyl-6-hydroxy-3-cyclohexene-1-carboxylate (SEPHCHC). This is 2-succinyl-5-enolpyruvyl-6-hydroxy-3-cyclohexene-1-carboxylate synthase from Escherichia coli (strain K12 / MC4100 / BW2952).